Reading from the N-terminus, the 97-residue chain is UPF0235 protein HD_0778 (97 aa).

This sequence belongs to the UPF0235 family.

The protein is UPF0235 protein HD_0778 of Haemophilus ducreyi (strain 35000HP / ATCC 700724).